The primary structure comprises 206 residues: Large ribosomal subunit protein eL13z (206 aa).

The segment at 185 to 206 (TNKRHAGARAKRAAEAEKEEKK) is disordered. Basic residues predominate over residues 186-195 (NKRHAGARAK). Residues 196-206 (RAAEAEKEEKK) are compositionally biased toward basic and acidic residues.

Belongs to the eukaryotic ribosomal protein eL13 family.

It is found in the cytoplasm. In Arabidopsis thaliana (Mouse-ear cress), this protein is Large ribosomal subunit protein eL13z (RPL13B).